The sequence spans 94 residues: Putative septation protein SpoVG (94 aa).

Belongs to the SpoVG family.

Functionally, could be involved in septation. This is Putative septation protein SpoVG from Acholeplasma laidlawii (strain PG-8A).